The primary structure comprises 78 residues: Cytochrome b-c1 complex subunit 10, mitochondrial (78 aa).

The Mitochondrial matrix segment spans residues 1–26; the sequence is MVSYVKGPAYKALSHFGKLNAPLVRS. The helical transmembrane segment at 27–46 threads the bilayer; it reads YIPNLVFWGAAAGGAVATFT. The Mitochondrial intermembrane portion of the chain corresponds to 47–78; that stretch reads EGVPLFQKTFYEKIPFFGQHWIYNPDPEDVPV.

This sequence belongs to the UQCR11/QCR10 family. Component of the ubiquinol-cytochrome c oxidoreductase (cytochrome b-c1 complex, complex III, CIII), a multisubunit enzyme composed of 10 subunits. The complex is composed of 3 respiratory subunits cytochrome b (COB), cytochrome c1 (CYT1) and Rieske protein (RIP1), 2 core protein subunits COR1 and QCR2, and 5 low-molecular weight protein subunits QCR6, QCR7, QCR8, QCR9 and QCR10. The complex exists as an obligatory dimer and forms supercomplexes (SCs) in the inner mitochondrial membrane with a monomer or a dimer of cytochrome c oxidase (complex IV, CIV), resulting in 2 different assemblies (supercomplexes III(2)IV and III(2)IV(2)).

It is found in the mitochondrion inner membrane. Component of the ubiquinol-cytochrome c oxidoreductase, a multisubunit transmembrane complex that is part of the mitochondrial electron transport chain which drives oxidative phosphorylation. The complex plays an important role in the uptake of multiple carbon sources present in different host niches. This Candida albicans (strain SC5314 / ATCC MYA-2876) (Yeast) protein is Cytochrome b-c1 complex subunit 10, mitochondrial.